Here is a 475-residue protein sequence, read N- to C-terminus: ATP-dependent rRNA helicase RRP3 (475 aa).

The segment at 30 to 59 is disordered; the sequence is ALKQKKQAPVTEKPEEIVETTSEASQDVNS. Residues 48 to 59 show a composition bias toward polar residues; sequence ETTSEASQDVNS. The short motif at 64 to 92 is the Q motif element; that stretch reads HTFSELNLVPELMEAIEKLKYTKPTPIQS. In terms of domain architecture, Helicase ATP-binding spans 95-266; it reads IPHALEGKDI…RASLHEPVKV (172 aa). 108–115 is a binding site for ATP; the sequence is AQTGSGKT. A DEAD box motif is present at residues 214–217; the sequence is DEAD. In terms of domain architecture, Helicase C-terminal spans 293-437; the sequence is FLIHLLNEFM…KDPSPPRDVL (145 aa). A disordered region spans residues 451-475; the sequence is AIKQTKDFHEKRTKKKRDDRDREER.

It belongs to the DEAD box helicase family. DDX47/RRP3 subfamily.

It is found in the nucleus. In terms of biological role, required for pre-ribosomal RNA processing. Involved in the maturation of the 35S-pre-rRNA and to its cleavage to mature 18S rRNA. The protein is ATP-dependent rRNA helicase RRP3 (RRP3) of Meyerozyma guilliermondii (strain ATCC 6260 / CBS 566 / DSM 6381 / JCM 1539 / NBRC 10279 / NRRL Y-324) (Yeast).